We begin with the raw amino-acid sequence, 356 residues long: Inositol phosphoceramide mannosyltransferase 3 (356 aa).

Residues Ile4 to Gly24 form a helical membrane-spanning segment. 2 N-linked (GlcNAc...) asparagine glycosylation sites follow: Asn52 and Asn146. A run of 2 helical transmembrane segments spans residues Phe197–Ala217 and Trp269–Gly289. Phosphoserine is present on residues Ser307, Ser353, and Ser355.

It belongs to the glycosyltransferase 32 family.

It localises to the endoplasmic reticulum membrane. Its subcellular location is the golgi apparatus. The protein resides in the cis-Golgi network membrane. It is found in the trans-Golgi network membrane. In terms of biological role, with imt1 and imt2, is required for the synthesis of mannosylinositol phosphoceramide (MIPC). Catalyzes the addition of mannosyl to inositol phosphoceramide (IPC). MIPC is essential for cell morphology, cell-surface distribution of ergosterol, localization for plasma-membrane transporters, and lipid-raft-mediated endocytosis of plasma membrane proteins to the vacuole. In Schizosaccharomyces pombe (strain 972 / ATCC 24843) (Fission yeast), this protein is Inositol phosphoceramide mannosyltransferase 3.